Here is a 488-residue protein sequence, read N- to C-terminus: L-arabinose isomerase 1 (488 aa).

The Mn(2+) site is built by E306, E331, H348, and H447.

The protein belongs to the arabinose isomerase family. Requires Mn(2+) as cofactor.

It catalyses the reaction beta-L-arabinopyranose = L-ribulose. It participates in carbohydrate degradation; L-arabinose degradation via L-ribulose; D-xylulose 5-phosphate from L-arabinose (bacterial route): step 1/3. Its function is as follows. Catalyzes the conversion of L-arabinose to L-ribulose. In Clostridium acetobutylicum (strain ATCC 824 / DSM 792 / JCM 1419 / IAM 19013 / LMG 5710 / NBRC 13948 / NRRL B-527 / VKM B-1787 / 2291 / W), this protein is L-arabinose isomerase 1.